A 177-amino-acid polypeptide reads, in one-letter code: ATP synthase subunit delta (177 aa).

This sequence belongs to the ATPase delta chain family. F-type ATPases have 2 components, F(1) - the catalytic core - and F(0) - the membrane proton channel. F(1) has five subunits: alpha(3), beta(3), gamma(1), delta(1), epsilon(1). F(0) has three main subunits: a(1), b(2) and c(10-14). The alpha and beta chains form an alternating ring which encloses part of the gamma chain. F(1) is attached to F(0) by a central stalk formed by the gamma and epsilon chains, while a peripheral stalk is formed by the delta and b chains.

It localises to the cell inner membrane. Functionally, f(1)F(0) ATP synthase produces ATP from ADP in the presence of a proton or sodium gradient. F-type ATPases consist of two structural domains, F(1) containing the extramembraneous catalytic core and F(0) containing the membrane proton channel, linked together by a central stalk and a peripheral stalk. During catalysis, ATP synthesis in the catalytic domain of F(1) is coupled via a rotary mechanism of the central stalk subunits to proton translocation. This protein is part of the stalk that links CF(0) to CF(1). It either transmits conformational changes from CF(0) to CF(1) or is implicated in proton conduction. This chain is ATP synthase subunit delta, found in Citrobacter koseri (strain ATCC BAA-895 / CDC 4225-83 / SGSC4696).